A 542-amino-acid chain; its full sequence is Membrane protein insertase YidC (542 aa).

A helical transmembrane segment spans residues 6–26; sequence NILLIGLLFVSFLLWQQWQAD. A compositionally biased stretch (polar residues) spans 32 to 41; the sequence is VAQTQSSVAP. The tract at residues 32–57 is disordered; the sequence is VAQTQSSVAPSTVADAHSSDVPDADS. 5 consecutive transmembrane segments (helical) span residues 326-346, 350-370, 421-441, 458-478, and 501-521; these read LVVD…LLMF, FVGN…GMLY, GGCL…WVLL, LSVQ…MFIM, and VIFT…WLVG.

It belongs to the OXA1/ALB3/YidC family. Type 1 subfamily. Interacts with the Sec translocase complex via SecD. Specifically interacts with transmembrane segments of nascent integral membrane proteins during membrane integration.

The protein localises to the cell inner membrane. In terms of biological role, required for the insertion and/or proper folding and/or complex formation of integral membrane proteins into the membrane. Involved in integration of membrane proteins that insert both dependently and independently of the Sec translocase complex, as well as at least some lipoproteins. Aids folding of multispanning membrane proteins. This is Membrane protein insertase YidC from Shewanella piezotolerans (strain WP3 / JCM 13877).